A 284-amino-acid polypeptide reads, in one-letter code: Tropomyosin Por p 1.0101 (284 aa).

N-acetylmethionine is present on M1. The disordered stretch occupies residues 1–21 (MDAIKKKMQAMKLEKDDAMDR). Residues 1–280 (MDAIKKKMQA…TDELDQAFSE (280 aa)) adopt a coiled-coil conformation. Basic and acidic residues predominate over residues 12-21 (KLEKDDAMDR).

This sequence belongs to the tropomyosin family. In terms of assembly, homodimer. In terms of tissue distribution, expressed in muscle (at protein level). Expressed in pincer muscles.

Tropomyosin, in association with the troponin complex, plays a central role in the calcium dependent regulation of muscle contraction. In Portunus pelagicus (Blue swimmer crab), this protein is Tropomyosin Por p 1.0101.